The chain runs to 309 residues: Taste receptor type 2 member 64 (309 aa).

Residues 1-3 lie on the Extracellular side of the membrane; it reads MVY. The chain crosses the membrane as a helical span at residues 4 to 26; it reads FLLIILSILVVFAFVLGNFSNGF. The Cytoplasmic portion of the chain corresponds to 27-46; sequence VALVNVIDWVKTRKISSADQ. The helical transmembrane segment at 47–69 threads the bilayer; that stretch reads ILTALVVSRIGLLWVILFHWYAN. Over 70–83 the chain is Extracellular; the sequence is VFNSALYSSEVGAV. Residues 84-106 traverse the membrane as a helical segment; that stretch reads ASNISAIINHFSIWLAASLGIFY. Residues 107 to 126 lie on the Cytoplasmic side of the membrane; the sequence is LLKIANFSNLIFLHLKKRIR. A helical membrane pass occupies residues 127-149; the sequence is SVVLVILLGPLVFLICNLAVITM. Residues 150 to 176 are Extracellular-facing; it reads DERVWTKEYEGNVTWKIKLRNAIHLSD. An N-linked (GlcNAc...) asparagine glycan is attached at Asn161. Residues 177 to 199 traverse the membrane as a helical segment; the sequence is LTVSTLANLIPFILTLICFLLLI. The Cytoplasmic segment spans residues 200–230; the sequence is CSLHKHLKKMQLHGKGSQDLSTKVHIKALQT. A helical transmembrane segment spans residues 231–253; sequence VISFLMLYAIYFLYLITLTWNLW. The Extracellular segment spans residues 254–258; it reads TQQNK. A helical transmembrane segment spans residues 259 to 281; the sequence is LVFLLCQTLGIMYPSFHSFFLIM. Residues 282–309 are Cytoplasmic-facing; the sequence is GSRKLKQTFLSVLCQVTCLVKGQQPSTP.

The protein belongs to the G-protein coupled receptor T2R family.

The protein localises to the membrane. Its function is as follows. Receptor that may play a role in the perception of bitterness and is gustducin-linked. May play a role in sensing the chemical composition of the gastrointestinal content. The activity of this receptor may stimulate alpha gustducin, mediate PLC-beta-2 activation and lead to the gating of TRPM5. This Pan paniscus (Pygmy chimpanzee) protein is Taste receptor type 2 member 64 (TAS2R64).